The sequence spans 185 residues: Ribosome maturation factor RimM (185 aa).

Residues 92 to 168 enclose the PRC barrel domain; sequence DDDTFYHADL…GRRVVVAEAF (77 aa).

This sequence belongs to the RimM family. As to quaternary structure, binds ribosomal protein uS19.

Its subcellular location is the cytoplasm. An accessory protein needed during the final step in the assembly of 30S ribosomal subunit, possibly for assembly of the head region. Essential for efficient processing of 16S rRNA. May be needed both before and after RbfA during the maturation of 16S rRNA. It has affinity for free ribosomal 30S subunits but not for 70S ribosomes. In Xanthobacter autotrophicus (strain ATCC BAA-1158 / Py2), this protein is Ribosome maturation factor RimM.